The chain runs to 276 residues: NADPH-dependent 7-cyano-7-deazaguanine reductase (276 aa).

80–82 provides a ligand contact to substrate; the sequence is IES. 82 to 83 contacts NADPH; sequence SK. The active-site Thioimide intermediate is Cys-178. The active-site Proton donor is Asp-185. Residue 217–218 coordinates substrate; it reads HE. 246-247 is a binding site for NADPH; it reads RG.

The protein belongs to the GTP cyclohydrolase I family. QueF type 2 subfamily. In terms of assembly, homodimer.

The protein resides in the cytoplasm. The enzyme catalyses 7-aminomethyl-7-carbaguanine + 2 NADP(+) = 7-cyano-7-deazaguanine + 2 NADPH + 3 H(+). It participates in tRNA modification; tRNA-queuosine biosynthesis. Functionally, catalyzes the NADPH-dependent reduction of 7-cyano-7-deazaguanine (preQ0) to 7-aminomethyl-7-deazaguanine (preQ1). This Teredinibacter turnerae (strain ATCC 39867 / T7901) protein is NADPH-dependent 7-cyano-7-deazaguanine reductase.